Consider the following 413-residue polypeptide: Arginine biosynthesis bifunctional protein ArgJ (413 aa).

Thr-158, Lys-184, Thr-195, Glu-285, Asn-408, and Ser-413 together coordinate substrate. Thr-195 (nucleophile) is an active-site residue.

It belongs to the ArgJ family. Heterotetramer of two alpha and two beta chains.

The protein localises to the cytoplasm. It carries out the reaction N(2)-acetyl-L-ornithine + L-glutamate = N-acetyl-L-glutamate + L-ornithine. The enzyme catalyses L-glutamate + acetyl-CoA = N-acetyl-L-glutamate + CoA + H(+). Its pathway is amino-acid biosynthesis; L-arginine biosynthesis; L-ornithine and N-acetyl-L-glutamate from L-glutamate and N(2)-acetyl-L-ornithine (cyclic): step 1/1. It functions in the pathway amino-acid biosynthesis; L-arginine biosynthesis; N(2)-acetyl-L-ornithine from L-glutamate: step 1/4. In terms of biological role, catalyzes two activities which are involved in the cyclic version of arginine biosynthesis: the synthesis of N-acetylglutamate from glutamate and acetyl-CoA as the acetyl donor, and of ornithine by transacetylation between N(2)-acetylornithine and glutamate. The sequence is that of Arginine biosynthesis bifunctional protein ArgJ from Mesorhizobium japonicum (strain LMG 29417 / CECT 9101 / MAFF 303099) (Mesorhizobium loti (strain MAFF 303099)).